We begin with the raw amino-acid sequence, 649 residues long: V-type ATP synthase subunit I (649 aa).

The next 7 membrane-spanning stretches (helical) occupy residues 312–332, 360–380, 453–473, 485–505, 520–540, 556–576, and 593–613; these read FFSF…GLVF, FMIL…FFGV, FIDN…LSLG, IGWV…LQAV, GLVG…GGVI, VFSD…GAMV, and ILII…GGVI.

Belongs to the V-ATPase 116 kDa subunit family.

The protein resides in the cell membrane. Functionally, produces ATP from ADP in the presence of a proton gradient across the membrane. The chain is V-type ATP synthase subunit I (atpI) from Chlamydia trachomatis serovar D (strain ATCC VR-885 / DSM 19411 / UW-3/Cx).